A 124-amino-acid chain; its full sequence is Protein RibT (124 aa).

In terms of domain architecture, N-acetyltransferase spans 3 to 124 (IRYKKSFEKI…QQDQDISYNN (122 aa)).

In terms of biological role, involved in riboflavin biosynthesis. The chain is Protein RibT (ribT) from Bacillus subtilis (strain 168).